The sequence spans 364 residues: Aminomethyltransferase (364 aa).

Belongs to the GcvT family. In terms of assembly, the glycine cleavage system is composed of four proteins: P, T, L and H.

The enzyme catalyses N(6)-[(R)-S(8)-aminomethyldihydrolipoyl]-L-lysyl-[protein] + (6S)-5,6,7,8-tetrahydrofolate = N(6)-[(R)-dihydrolipoyl]-L-lysyl-[protein] + (6R)-5,10-methylene-5,6,7,8-tetrahydrofolate + NH4(+). In terms of biological role, the glycine cleavage system catalyzes the degradation of glycine. This chain is Aminomethyltransferase, found in Shewanella sp. (strain ANA-3).